The following is an 828-amino-acid chain: Periplasmic nitrate reductase (828 aa).

Residues 1 to 31 (MKLSRRSFMKANAVAAAAAAAGLSVPGVARA) constitute a signal peptide (tat-type signal). One can recognise a 4Fe-4S Mo/W bis-MGD-type domain in the interval 39 to 95 (IKWDKAPCRFCGTGCGVLVGTQQGRVVACQGDPDAPVNRGLNCIKGYFLPKIMYGKD). [4Fe-4S] cluster contacts are provided by Cys46, Cys49, Cys53, and Cys81. Residues Lys83, Gln150, Asn175, Cys179, 212 to 219 (WGANMAEM), 243 to 247 (STYQH), 262 to 264 (QSD), Met372, Gln376, Asn482, 508 to 509 (SD), Lys531, Asp558, and 718 to 727 (TGRVLEHWHT) each bind Mo-bis(molybdopterin guanine dinucleotide). Phe794 serves as a coordination point for substrate. Residues Asn802 and Lys819 each coordinate Mo-bis(molybdopterin guanine dinucleotide).

The protein belongs to the prokaryotic molybdopterin-containing oxidoreductase family. NasA/NapA/NarB subfamily. In terms of assembly, component of the periplasmic nitrate reductase NapAB complex composed of NapA and NapB. It depends on [4Fe-4S] cluster as a cofactor. Requires Mo-bis(molybdopterin guanine dinucleotide) as cofactor. In terms of processing, predicted to be exported by the Tat system. The position of the signal peptide cleavage has not been experimentally proven.

It is found in the periplasm. It catalyses the reaction 2 Fe(II)-[cytochrome] + nitrate + 2 H(+) = 2 Fe(III)-[cytochrome] + nitrite + H2O. Functionally, catalytic subunit of the periplasmic nitrate reductase complex NapAB. Receives electrons from NapB and catalyzes the reduction of nitrate to nitrite. The chain is Periplasmic nitrate reductase from Escherichia coli O7:K1 (strain IAI39 / ExPEC).